Reading from the N-terminus, the 169-residue chain is Regulator of ribonuclease activity A (169 aa).

The protein belongs to the RraA family. In terms of assembly, homotrimer. Binds to both RNA-binding sites in the C-terminal region of Rne and to RhlB.

The protein localises to the cytoplasm. Globally modulates RNA abundance by binding to RNase E (Rne) and regulating its endonucleolytic activity. Can modulate Rne action in a substrate-dependent manner by altering the composition of the degradosome. Modulates RNA-binding and helicase activities of the degradosome. This chain is Regulator of ribonuclease activity A, found in Photorhabdus laumondii subsp. laumondii (strain DSM 15139 / CIP 105565 / TT01) (Photorhabdus luminescens subsp. laumondii).